The chain runs to 345 residues: MSIAVGLSACALSSVLFGSMFVPVKKCHSGNGIFVQWIMSTAILLVGIVVYSTQGFPEFEPLAMLGGMFWALGNATAVPIMNTIGIGMGMLVWGTTNCVAGWAAGRFGLFGINSTVPEYPFLNYFGLVLVVFGGFLFSQIRPNEPQTASERSPLMVAPDDDLTDDVAPDDSDIVVPRGGAVPTRAHRNQKRLLAIITSLVAGVFYGFTFVPVIYIQDHPEIYPTAPKTGLGYVFSHYIGIFCTASALMIGYVIYSRNNPFASSRLVGPSMTAGSMWGIAQASWFVANDNLSQAVSFPIISMVPGVIAALWSVFYFRDISGSRNLRLLSIAVAITLIGAICVGVSK.

Helical transmembrane passes span 3-23 (IAVGLSACALSSVLFGSMFVP), 32-52 (GIFVQWIMSTAILLVGIVVYS), 61-81 (PLAMLGGMFWALGNATAVPIM), 84-104 (IGIGMGMLVWGTTNCVAGWAA), 120-140 (PFLNYFGLVLVVFGGFLFSQI), 193-213 (LAIITSLVAGVFYGFTFVPVI), 233-253 (VFSHYIGIFCTASALMIGYVI), 265-285 (LVGPSMTAGSMWGIAQASWFV), 293-313 (AVSFPIISMVPGVIAALWSVF), and 324-344 (LRLLSIAVAITLIGAICVGVS).

Belongs to the TMEM144 family.

The protein resides in the membrane. This Caenorhabditis elegans protein is Transmembrane protein 144 homolog.